The following is a 325-amino-acid chain: uncharacterized protein (325 aa).

The helical transmembrane segment at Ile10–His30 threads the bilayer. The region spanning Lys94–Ile166 is the AB hydrolase-1 domain.

It is found in the cell membrane. This is an uncharacterized protein from Bacillus subtilis (strain 168).